The chain runs to 153 residues: Probable trafficking protein particle complex subunit 2 (153 aa).

It belongs to the TRAPP small subunits family. Sedlin subfamily. Part of the multisubunit TRAPP (transport protein particle) complex.

The protein resides in the cytoplasm. It is found in the perinuclear region. The protein localises to the endoplasmic reticulum. Its subcellular location is the golgi apparatus. Functionally, may play a role in vesicular transport from endoplasmic reticulum to Golgi. The protein is Probable trafficking protein particle complex subunit 2 of Nematostella vectensis (Starlet sea anemone).